Here is a 273-residue protein sequence, read N- to C-terminus: Replication factor A protein 2 (273 aa).

Residues 1–13 (MATYQPYNEYSSV) show a composition bias toward polar residues. The disordered stretch occupies residues 1 to 38 (MATYQPYNEYSSVTGGGFENSESRPGSGESETNTRVNT). Ser27 carries the phosphoserine modification. Positions 29-38 (ESETNTRVNT) are enriched in polar residues. A DNA-binding region (OB) is located at residues 69-157 (VCFVGVVRNI…NIQYAVIKPI (89 aa)). Residue Ser122 is modified to Phosphoserine.

Belongs to the replication factor A protein 2 family. As to quaternary structure, heterotrimer of 69, 36, and 13 kDa chains. The DNA-binding activity may reside exclusively on the 69 kDa subunit. Interacts with MCM10. Phosphorylated in a cell cycle-dependent manner with phosphorylation increasing at the entry in S phase and dephosphorylation occurring at mitosis. In terms of processing, the N-terminus is blocked.

It localises to the nucleus. Its function is as follows. Binds to single-stranded sequences participating in DNA replication in addition to those mediating transcriptional repression (URS1) and activation (CAR1). Stimulates the activity of a cognate strand exchange protein (SEP1). It cooperates with T-AG and DNA topoisomerase I to unwind template DNA containing the simian virus 40 origin of DNA replication. The protein is Replication factor A protein 2 (RFA2) of Saccharomyces cerevisiae (strain ATCC 204508 / S288c) (Baker's yeast).